A 221-amino-acid chain; its full sequence is Phosphoenolpyruvate guanylyltransferase (221 aa).

T154, G169, and S172 together coordinate phosphoenolpyruvate.

The protein belongs to the CofC family.

It carries out the reaction phosphoenolpyruvate + GTP + H(+) = enolpyruvoyl-2-diphospho-5'-guanosine + diphosphate. It participates in cofactor biosynthesis; coenzyme F420 biosynthesis. Guanylyltransferase that catalyzes the activation of phosphoenolpyruvate (PEP) as enolpyruvoyl-2-diphospho-5'-guanosine, via the condensation of PEP with GTP. It is involved in the biosynthesis of coenzyme F420, a hydride carrier cofactor. This Mycolicibacterium smegmatis (strain ATCC 700084 / mc(2)155) (Mycobacterium smegmatis) protein is Phosphoenolpyruvate guanylyltransferase.